Reading from the N-terminus, the 485-residue chain is Glutamyl-tRNA(Gln) amidotransferase subunit A (485 aa).

Residues Lys-79 and Ser-154 each act as charge relay system in the active site. The active-site Acyl-ester intermediate is Ser-178.

The protein belongs to the amidase family. GatA subfamily. As to quaternary structure, heterotrimer of A, B and C subunits.

The catalysed reaction is L-glutamyl-tRNA(Gln) + L-glutamine + ATP + H2O = L-glutaminyl-tRNA(Gln) + L-glutamate + ADP + phosphate + H(+). Its function is as follows. Allows the formation of correctly charged Gln-tRNA(Gln) through the transamidation of misacylated Glu-tRNA(Gln) in organisms which lack glutaminyl-tRNA synthetase. The reaction takes place in the presence of glutamine and ATP through an activated gamma-phospho-Glu-tRNA(Gln). The chain is Glutamyl-tRNA(Gln) amidotransferase subunit A from Staphylococcus aureus (strain Mu3 / ATCC 700698).